A 190-amino-acid polypeptide reads, in one-letter code: MNWHMIISGLIVVVIKVVGMTFFLLYFPQVFGKSNDGFVPTESYGTTSVQNVSQIFGRNDESTMPTRSYGTVCPRNWDFHQGKCFFFSFSESPWKDSMDYCATQGSTLAIVNTPEKLKYLQDIAGIENYFIGLVRQPGEKKWRWINNSVFNGNVTNQDQNFDCVTIGLTKTYDAASCEVSYRWICEMNAK.

Topologically, residues 1 to 4 (MNWH) are cytoplasmic. Residues 5–25 (MIISGLIVVVIKVVGMTFFLL) traverse the membrane as a helical; Signal-anchor for type II membrane protein segment. The Extracellular portion of the chain corresponds to 26-190 (YFPQVFGKSN…YRWICEMNAK (165 aa)). Residues Asn51, Asn146, and Asn153 are each glycosylated (N-linked (GlcNAc...) asparagine). Positions 80 to 186 (HQGKCFFFSF…CEVSYRWICE (107 aa)) constitute a C-type lectin domain. 2 disulfides stabilise this stretch: Cys101-Cys185 and Cys163-Cys177.

As to quaternary structure, monomer. Homodimer. The majority of CLEC5A is expressed as a monomeric form on macrophages. Interacts with TYROBP/DAP12. The interaction with TYROBP is required for CLEC5 cell surface expression. Interacts with HCST/DAP10. Forms a CLEC5A/TYROBP/HCST trimolecular complex depending almost solely on TYROBP. Post-translationally, N-glycosylated. Contains sialic acid residues. In terms of tissue distribution, strong expression in bone marrow cells and thioglycollate-induced neutrophils (at protein level). Expressed on granulocytes and monocytes from bone marrow and peripheral blood. Expressed in macrophage cell line J-774, but not in T-cell lines, B-cell lines, or mast cell lines.

Its subcellular location is the cell membrane. Functionally, functions as a positive regulator of osteoclastogenesis. Cell surface receptor that signals via TYROBP. Regulates inflammatory responses. This is C-type lectin domain family 5 member A (Clec5a) from Mus musculus (Mouse).